A 1381-amino-acid polypeptide reads, in one-letter code: Hepatocyte growth factor receptor (1381 aa).

An N-terminal signal peptide occupies residues 1–24; it reads MKAPTVLTPGILVLLFILVQRSNG. Residues 25-932 are Extracellular-facing; that stretch reads ECKEALTKSE…VIVQPDQNFT (908 aa). The Sema domain maps to 27-515; it reads KEALTKSEMN…TGKKITKIPL (489 aa). Residue N45 is glycosylated (N-linked (GlcNAc...) asparagine). Cystine bridges form between C95/C101, C98/C160, C133/C141, and C172/C175. Residue N106 is glycosylated (N-linked (GlcNAc...) asparagine). A glycan (N-linked (GlcNAc...) asparagine) is linked at N149. N202 carries an N-linked (GlcNAc...) asparagine glycan. Disulfide bonds link C298–C363 and C385–C397. The N-linked (GlcNAc...) asparagine glycan is linked to N399. Cystine bridges form between C520/C538, C526/C561, C529/C545, and C541/C551. 3 consecutive IPT/TIG domains span residues 563–655, 657–739, and 742–836; these read PTIY…FSYV, PIIT…FSYR, and PIVY…LIYV. T582 is a glycosylation site (O-linked (Man) threonine). 2 N-linked (GlcNAc...) asparagine glycosylation sites follow: N607 and N635. T676 and T761 each carry an O-linked (Man) threonine glycan. N785, N879, and N930 each carry an N-linked (GlcNAc...) asparagine glycan. A helical membrane pass occupies residues 933–955; that stretch reads GLIAGVVSISIALLLLLGLFLWL. At 956 to 1381 the chain is on the cytoplasmic side; the sequence is KKRKQIKDLG…QDNADGEVDT (426 aa). A Phosphoserine modification is found at S966. T977 carries the phosphothreonine modification. A phosphoserine mark is found at S990, S997, and S1000. Y1003 bears the Phosphotyrosine mark. The 268-residue stretch at 1078–1345 folds into the Protein kinase domain; it reads VHFNEVIGRG…RISAIFSAFI (268 aa). Residues 1084–1092 and K1110 each bind ATP; that span reads IGRGHFGCV. The active-site Proton acceptor is the D1204. Positions 1212-1381 are interaction with RANBP9; the sequence is LDEKFTVKVA…QDNADGEVDT (170 aa). A Phosphotyrosine modification is found at Y1230. A phosphotyrosine; by autocatalysis mark is found at Y1234 and Y1235. T1289 carries the phosphothreonine modification. The segment at 1320–1359 is interaction with MUC20; the sequence is WHPKAEMRPSFSELVSRISAIFSAFIGEHYVHVNATYVNV. Y1349 and Y1356 each carry phosphotyrosine; by autocatalysis. The residue at position 1365 (Y1365) is a Phosphotyrosine.

It belongs to the protein kinase superfamily. Tyr protein kinase family. As to quaternary structure, heterodimer made of an alpha chain (50 kDa) and a beta chain (145 kDa) which are disulfide linked. Binds PLXNB1. Interacts when phosphorylated with downstream effectors including STAT3, PIK3R1, SRC, PCLG1, GRB2 and GAB1. Interacts with SPSB1, SPSB2 and SPSB4. Interacts with INPP5D/SHIP1. When phosphorylated at Tyr-1356, interacts with INPPL1/SHIP2. Interacts with RANBP9 and RANBP10, as well as SPSB1, SPSB2, SPSB3 and SPSB4. SPSB1 binding occurs in the presence and in the absence of HGF, however HGF treatment has a positive effect on this interaction. Interacts with MUC20; prevents interaction with GRB2 and suppresses hepatocyte growth factor-induced cell proliferation. Interacts with GRB10. Interacts with PTPN1 and PTPN2. Interacts with tensin TNS3. Interacts (when phosphorylated) with tensin TNS4 (via SH2 domain); the interaction increases MET protein stability by inhibiting MET endocytosis and subsequent lysosomal degradation. In terms of processing, autophosphorylated in response to ligand binding on Tyr-1234 and Tyr-1235 in the kinase domain leading to further phosphorylation of Tyr-1349 and Tyr-1356 in the C-terminal multifunctional docking site. Dephosphorylated by PTPRJ at Tyr-1349 and Tyr-1365. Dephosphorylated by PTPN1 and PTPN2. Post-translationally, ubiquitinated. Ubiquitination by CBL regulates the receptor stability and activity through proteasomal degradation. O-mannosylation of IPT/TIG domains by TMEM260 is required for protein maturation. O-mannosylated residues are composed of single mannose glycans that are not elongated or modified.

The protein resides in the membrane. The catalysed reaction is L-tyrosyl-[protein] + ATP = O-phospho-L-tyrosyl-[protein] + ADP + H(+). With respect to regulation, in its inactive state, the C-terminal tail interacts with the catalytic domain and inhibits the kinase activity. Upon ligand binding, the C-terminal tail is displaced and becomes phosphorylated, thus increasing the kinase activity. Its function is as follows. Receptor tyrosine kinase that transduces signals from the extracellular matrix into the cytoplasm by binding to hepatocyte growth factor/HGF ligand. Regulates many physiological processes including proliferation, scattering, morphogenesis and survival. Ligand binding at the cell surface induces autophosphorylation of MET on its intracellular domain that provides docking sites for downstream signaling molecules. Following activation by ligand, interacts with the PI3-kinase subunit PIK3R1, PLCG1, SRC, GRB2, STAT3 or the adapter GAB1. Recruitment of these downstream effectors by MET leads to the activation of several signaling cascades including the RAS-ERK, PI3 kinase-AKT, or PLCgamma-PKC. The RAS-ERK activation is associated with the morphogenetic effects while PI3K/AKT coordinates prosurvival effects. During embryonic development, MET signaling plays a role in gastrulation, development and migration of muscles and neuronal precursors, angiogenesis and kidney formation. In adults, participates in wound healing as well as organ regeneration and tissue remodeling. Also promotes differentiation and proliferation of hematopoietic cells. This chain is Hepatocyte growth factor receptor (MET), found in Ateles geoffroyi (Black-handed spider monkey).